Here is a 118-residue protein sequence, read N- to C-terminus: Ribonuclease P protein component 4 (118 aa).

Zn(2+) contacts are provided by cysteine 59, cysteine 62, cysteine 85, and cysteine 88.

Belongs to the eukaryotic/archaeal RNase P protein component 4 family. Consists of a catalytic RNA component and at least 4-5 protein subunits. Zn(2+) is required as a cofactor.

The protein resides in the cytoplasm. It catalyses the reaction Endonucleolytic cleavage of RNA, removing 5'-extranucleotides from tRNA precursor.. In terms of biological role, part of ribonuclease P, a protein complex that generates mature tRNA molecules by cleaving their 5'-ends. The polypeptide is Ribonuclease P protein component 4 (Sulfolobus acidocaldarius (strain ATCC 33909 / DSM 639 / JCM 8929 / NBRC 15157 / NCIMB 11770)).